The following is a 241-amino-acid chain: uncharacterized protein (241 aa).

The segment at 19–53 (KRIGYGMGEKSSAGSSRDQTYSVKPASDVKDKKKV) is disordered. The span at 30–39 (SAGSSRDQTY) shows a compositional bias: polar residues.

This is an uncharacterized protein from Ostreid herpesvirus 1 (isolate France) (OsHV-1).